Here is a 274-residue protein sequence, read N- to C-terminus: Thiamine kinase (274 aa).

Belongs to the thiamine kinase family.

The catalysed reaction is thiamine + ATP = thiamine phosphate + ADP + H(+). It participates in cofactor biosynthesis; thiamine diphosphate biosynthesis; thiamine phosphate from thiamine: step 1/1. Functionally, catalyzes the ATP-dependent phosphorylation of thiamine to thiamine phosphate. Is involved in thiamine salvage. The protein is Thiamine kinase of Escherichia coli O81 (strain ED1a).